A 167-amino-acid polypeptide reads, in one-letter code: Ribosome maturation factor RimM (167 aa).

The PRC barrel domain occupies 94 to 165 (ENEFYYSDII…KIIITPMEGL (72 aa)).

It belongs to the RimM family. Binds ribosomal protein uS19.

The protein localises to the cytoplasm. An accessory protein needed during the final step in the assembly of 30S ribosomal subunit, possibly for assembly of the head region. Essential for efficient processing of 16S rRNA. May be needed both before and after RbfA during the maturation of 16S rRNA. It has affinity for free ribosomal 30S subunits but not for 70S ribosomes. In Staphylococcus aureus (strain NCTC 8325 / PS 47), this protein is Ribosome maturation factor RimM.